A 386-amino-acid chain; its full sequence is Magnesium transporter MRS2-7 (386 aa).

A run of 2 helical transmembrane segments spans residues 321 to 341 and 355 to 375; these read LMLSAGTVCVSVYSMIAGIFG and IFKWVVSLTGTFCIVLFVIIL. The Required for magnesium transport activity signature appears at 341–343; the sequence is GMN.

Belongs to the CorA metal ion transporter (MIT) (TC 1.A.35.5) family. As to expression, isoform 1 is expressed in the whole plant. Isoform 4 is expressed only in roots and flowers.

Its subcellular location is the endoplasmic reticulum membrane. Its function is as follows. Low-affinity magnesium transporter that mediates the influx of magnesium. The protein is Magnesium transporter MRS2-7 (MRS2-7) of Arabidopsis thaliana (Mouse-ear cress).